The chain runs to 164 residues: MERFLENVMYASRWLLAPVYFGLSLALIALALKFFQEILHVLPNVFALAEADLILVLLSLVDMTLVGGLLVMVMFSGYENFVSQLDISAGKEKLNWLGKMDATSLKNKVAASIVAISSIHLLRVFMDAKNVPDNKLMWYVIIHLTFVLSAFVMGYLDRLTRHNH.

3 helical membrane passes run leucine 15–phenylalanine 35, leucine 53–valine 73, and leucine 136–leucine 156.

The protein belongs to the UPF0114 family.

It localises to the cell membrane. In Salmonella agona (strain SL483), this protein is UPF0114 protein YqhA.